The chain runs to 387 residues: Delta(12)-acyl-lipid-desaturase (387 aa).

Residues 1–31 (MGAGGRMTVPNKWEGEGDEKSQKPVQRVPSA) form a disordered region. The segment covering 13–22 (WEGEGDEKSQ) has biased composition (basic and acidic residues). Helical transmembrane passes span 58–78 (SYVL…TTYI) and 88–108 (AAWP…WVIA). Positions 109–113 (HECGH) match the Histidine box-1 motif. The helical transmembrane segment at 121–141 (WVDDCVGLVLHSALLVPYFSW) threads the bilayer. The Histidine box-2 motif lies at 145–149 (HRRHH). 3 helical membrane passes run 183–203 (VMTL…LNVS), 229–249 (IYIS…IAAA), and 251–271 (GLAW…AFLV). Positions 319-323 (HVAHH) match the Histidine box-3 motif.

Belongs to the fatty acid desaturase type 1 family.

Its subcellular location is the membrane. It functions in the pathway lipid metabolism; polyunsaturated fatty acid biosynthesis. Delta(12)-fatty acid desaturase producing in a heterologous system linoleic acid (18:2(9Z,12Z)) and to a lower extent hexadecadienoic acid (16:2(9Z,12Z)). This is Delta(12)-acyl-lipid-desaturase from Punica granatum (Pomegranate).